We begin with the raw amino-acid sequence, 327 residues long: Pyruvate dehydrogenase E1 component subunit beta (327 aa).

Glu60 lines the thiamine diphosphate pocket.

Heterodimer of an alpha and a beta chain. The cofactor is thiamine diphosphate.

It carries out the reaction N(6)-[(R)-lipoyl]-L-lysyl-[protein] + pyruvate + H(+) = N(6)-[(R)-S(8)-acetyldihydrolipoyl]-L-lysyl-[protein] + CO2. In terms of biological role, the pyruvate dehydrogenase complex catalyzes the overall conversion of pyruvate to acetyl-CoA and CO(2). It contains multiple copies of three enzymatic components: pyruvate dehydrogenase (E1), dihydrolipoamide acetyltransferase (E2) and lipoamide dehydrogenase (E3). The sequence is that of Pyruvate dehydrogenase E1 component subunit beta (pdhB) from Acholeplasma laidlawii.